Consider the following 427-residue polypeptide: Glutamate-1-semialdehyde 2,1-aminomutase (427 aa).

Position 268 is an N6-(pyridoxal phosphate)lysine (lysine 268).

It belongs to the class-III pyridoxal-phosphate-dependent aminotransferase family. HemL subfamily. It depends on pyridoxal 5'-phosphate as a cofactor.

The protein resides in the cytoplasm. The enzyme catalyses (S)-4-amino-5-oxopentanoate = 5-aminolevulinate. It functions in the pathway porphyrin-containing compound metabolism; protoporphyrin-IX biosynthesis; 5-aminolevulinate from L-glutamyl-tRNA(Glu): step 2/2. This chain is Glutamate-1-semialdehyde 2,1-aminomutase, found in Methanococcus maripaludis (strain C5 / ATCC BAA-1333).